The chain runs to 253 residues: Transmembrane protein 69 (253 aa).

The next 5 membrane-spanning stretches (helical) occupy residues 104 to 124 (ALYLGLAGLIPFVSAPLLMNV), 137 to 157 (VAYGASILSFLGGVRWGFAIP), 165 to 185 (DWMNLTNSTVPALLAWLALLF), 192 to 212 (AAVLVIMGLGIALHYDLALLP), and 223 to 243 (AILTVVAVFSLVGSLINSSVY).

The protein localises to the membrane. This Xenopus tropicalis (Western clawed frog) protein is Transmembrane protein 69 (tmem69).